Here is an 85-residue protein sequence, read N- to C-terminus: Conotoxin Lv15a (85 aa).

The first 23 residues, 1 to 23, serve as a signal peptide directing secretion; it reads MEKLTVLILVATVLLMIQVLAQS. Positions 24-49 are excised as a propeptide; it reads GGDKHLKRRPKQYATKRLSALMRGHR. Gln50 is modified (pyrrolidone carboxylic acid).

Belongs to the conotoxin O2 superfamily. Post-translationally, contains 4 disulfide bonds. Expressed by the venom duct.

The protein resides in the secreted. The sequence is that of Conotoxin Lv15a from Conus lividus (Livid cone).